The sequence spans 510 residues: GMP synthase [glutamine-hydrolyzing] (510 aa).

The Glutamine amidotransferase type-1 domain maps to 5–195 (LVFIIDFGGQ…LFNICELKGD (191 aa)). The Nucleophile role is filled by cysteine 82. Residues histidine 169 and glutamate 171 contribute to the active site. Residues 196–385 (WSVTSFAEEK…LGIPHKLVWR (190 aa)) form the GMPS ATP-PPase domain. 223–229 (SGGVDSS) contributes to the ATP binding site.

In terms of assembly, homodimer.

It carries out the reaction XMP + L-glutamine + ATP + H2O = GMP + L-glutamate + AMP + diphosphate + 2 H(+). Its pathway is purine metabolism; GMP biosynthesis; GMP from XMP (L-Gln route): step 1/1. Catalyzes the synthesis of GMP from XMP. This is GMP synthase [glutamine-hydrolyzing] from Clostridium tetani (strain Massachusetts / E88).